The following is a 1342-amino-acid chain: DNA-directed RNA polymerase subunit beta (1342 aa).

Belongs to the RNA polymerase beta chain family. As to quaternary structure, the RNAP catalytic core consists of 2 alpha, 1 beta, 1 beta' and 1 omega subunit. When a sigma factor is associated with the core the holoenzyme is formed, which can initiate transcription.

The catalysed reaction is RNA(n) + a ribonucleoside 5'-triphosphate = RNA(n+1) + diphosphate. In terms of biological role, DNA-dependent RNA polymerase catalyzes the transcription of DNA into RNA using the four ribonucleoside triphosphates as substrates. This Histophilus somni (strain 129Pt) (Haemophilus somnus) protein is DNA-directed RNA polymerase subunit beta.